The sequence spans 172 residues: MDHLKKYITEINDYPKKGIVFKDLNPIYKEPKIWKELMFPLQNLISTKKPDYIAGIESRGFISASALAFKLEIGLITIRKPNKLPGEVIGTNYKLEYGEDRLEIQQNIMEKDSKIMLFDDLLATGGTAGAAGNLIKKAGGNLIGYAFLVELTELKGRENLDSNLFVETLIKY.

The protein belongs to the purine/pyrimidine phosphoribosyltransferase family. In terms of assembly, homodimer.

Its subcellular location is the cytoplasm. It catalyses the reaction AMP + diphosphate = 5-phospho-alpha-D-ribose 1-diphosphate + adenine. The protein operates within purine metabolism; AMP biosynthesis via salvage pathway; AMP from adenine: step 1/1. In terms of biological role, catalyzes a salvage reaction resulting in the formation of AMP, that is energically less costly than de novo synthesis. The sequence is that of Adenine phosphoribosyltransferase from Prochlorococcus marinus (strain NATL2A).